The following is a 226-amino-acid chain: Octanoyltransferase (226 aa).

The region spanning 31-226 (PETPDALWIC…SQKLGTYLAP (196 aa)) is the BPL/LPL catalytic domain. Residues 70–77 (RGGQVTFH), 159–161 (ALG), and 172–174 (GVA) contribute to the substrate site. C190 serves as the catalytic Acyl-thioester intermediate.

This sequence belongs to the LipB family.

The protein localises to the cytoplasm. It carries out the reaction octanoyl-[ACP] + L-lysyl-[protein] = N(6)-octanoyl-L-lysyl-[protein] + holo-[ACP] + H(+). It participates in protein modification; protein lipoylation via endogenous pathway; protein N(6)-(lipoyl)lysine from octanoyl-[acyl-carrier-protein]: step 1/2. Catalyzes the transfer of endogenously produced octanoic acid from octanoyl-acyl-carrier-protein onto the lipoyl domains of lipoate-dependent enzymes. Lipoyl-ACP can also act as a substrate although octanoyl-ACP is likely to be the physiological substrate. The chain is Octanoyltransferase from Variovorax paradoxus (strain S110).